A 206-amino-acid chain; its full sequence is High frequency lysogenization protein HflD homolog (206 aa).

Belongs to the HflD family.

The protein resides in the cytoplasm. It is found in the cell inner membrane. The protein is High frequency lysogenization protein HflD homolog of Ectopseudomonas mendocina (strain ymp) (Pseudomonas mendocina).